Reading from the N-terminus, the 213-residue chain is Thiamine-phosphate synthase (213 aa).

4-amino-2-methyl-5-(diphosphooxymethyl)pyrimidine-binding positions include 38-42 (QLREK) and D70. Positions 71 and 90 each coordinate Mg(2+). Residue S109 participates in 4-amino-2-methyl-5-(diphosphooxymethyl)pyrimidine binding. 135-137 (TQT) is a 2-[(2R,5Z)-2-carboxy-4-methylthiazol-5(2H)-ylidene]ethyl phosphate binding site. K138 serves as a coordination point for 4-amino-2-methyl-5-(diphosphooxymethyl)pyrimidine. Residues G165 and 185–186 (VS) each bind 2-[(2R,5Z)-2-carboxy-4-methylthiazol-5(2H)-ylidene]ethyl phosphate.

This sequence belongs to the thiamine-phosphate synthase family. It depends on Mg(2+) as a cofactor.

It carries out the reaction 2-[(2R,5Z)-2-carboxy-4-methylthiazol-5(2H)-ylidene]ethyl phosphate + 4-amino-2-methyl-5-(diphosphooxymethyl)pyrimidine + 2 H(+) = thiamine phosphate + CO2 + diphosphate. It catalyses the reaction 2-(2-carboxy-4-methylthiazol-5-yl)ethyl phosphate + 4-amino-2-methyl-5-(diphosphooxymethyl)pyrimidine + 2 H(+) = thiamine phosphate + CO2 + diphosphate. The catalysed reaction is 4-methyl-5-(2-phosphooxyethyl)-thiazole + 4-amino-2-methyl-5-(diphosphooxymethyl)pyrimidine + H(+) = thiamine phosphate + diphosphate. It participates in cofactor biosynthesis; thiamine diphosphate biosynthesis; thiamine phosphate from 4-amino-2-methyl-5-diphosphomethylpyrimidine and 4-methyl-5-(2-phosphoethyl)-thiazole: step 1/1. Its function is as follows. Condenses 4-methyl-5-(beta-hydroxyethyl)thiazole monophosphate (THZ-P) and 2-methyl-4-amino-5-hydroxymethyl pyrimidine pyrophosphate (HMP-PP) to form thiamine monophosphate (TMP). This Lacticaseibacillus paracasei (strain ATCC 334 / BCRC 17002 / CCUG 31169 / CIP 107868 / KCTC 3260 / NRRL B-441) (Lactobacillus paracasei) protein is Thiamine-phosphate synthase.